The following is a 391-amino-acid chain: ATP-sensitive inward rectifier potassium channel 1 (391 aa).

Residues 1–77 (MNASSRNVFD…IWTTVLDLKW (77 aa)) are Cytoplasmic-facing. S44 carries the post-translational modification Phosphoserine; by SGK1. Residues 78–102 (RYKMTIFITAFLGSWFFFGLLWYAV) form a helical membrane-spanning segment. The Extracellular portion of the chain corresponds to 103-127 (AYIHKDLPEFHPSANHTPCVENING). N-linked (GlcNAc...) asparagine glycosylation occurs at N117. Residues 128 to 139 (LTSAFLFSLETQ) constitute an intramembrane region (helical; Pore-forming). The segment at residues 140 to 146 (VTIGYGF) is an intramembrane region (pore-forming). The short motif at 141 to 146 (TIGYGF) is the Selectivity filter element. Topologically, residues 147–155 (RCVTEQCAT) are extracellular. A helical transmembrane segment spans residues 156 to 177 (AIFLLIFQSILGVIINSFMCGA). Residues 178-391 (ILAKISRPKK…EVNETDDTKM (214 aa)) lie on the Cytoplasmic side of the membrane. Positions 180–207 (AKISRPKKRAKTITFSKNAVISKRGGKL) are polyphosphoinositide (PIP2)-binding. 223–230 (GSHIYGKL) contributes to the ATP binding site.

It belongs to the inward rectifier-type potassium channel (TC 1.A.2.1) family. KCNJ1 subfamily. As to quaternary structure, interacts with SGK1 and SLC9A3R2/NHERF2. Post-translationally, phosphorylation at Ser-44 by SGK1 is necessary for its expression at the cell membrane. In terms of tissue distribution, in the kidney and pancreatic islets. Lower levels in skeletal muscle, pancreas, spleen, brain, heart and liver.

It is found in the cell membrane. It catalyses the reaction K(+)(in) = K(+)(out). With respect to regulation, inhibited by WNK3. Activated by phosphatidylinositol 4,5 biphosphate (PtdIns(4,5)P2). In terms of biological role, inward rectifier potassium channels are characterized by a greater tendency to allow potassium to flow into the cell rather than out of it. Their voltage dependence is regulated by the concentration of extracellular potassium; as external potassium is raised, the voltage range of the channel opening shifts to more positive voltages. The inward rectification is mainly due to the blockage of outward current by internal magnesium. This channel is activated by internal ATP and can be blocked by external barium. In the kidney, probably plays a major role in potassium homeostasis. In Homo sapiens (Human), this protein is ATP-sensitive inward rectifier potassium channel 1 (KCNJ1).